We begin with the raw amino-acid sequence, 124 residues long: Nucleoid-associated protein Noca_0318 (124 aa).

The protein belongs to the YbaB/EbfC family. As to quaternary structure, homodimer.

The protein localises to the cytoplasm. Its subcellular location is the nucleoid. In terms of biological role, binds to DNA and alters its conformation. May be involved in regulation of gene expression, nucleoid organization and DNA protection. The polypeptide is Nucleoid-associated protein Noca_0318 (Nocardioides sp. (strain ATCC BAA-499 / JS614)).